We begin with the raw amino-acid sequence, 734 residues long: MCRFFATAPKGLNELLREELTTFGAENIKTQPTGATFDGDLEVGYRSCLWSRLANRIYLVLLETELPNQEALSSVVQSIDWSKHIDKEGTFAVSFSGQGLGITHSHYGALKIKDGIVDYFREHYQVRPSIDTEVPDIRVHGHLNRNQLTLSLDLSGYSLHQRGYREGIQVEAPLKENVAAAILMRANWPEIAQQGGAFYDPMCGSGTFLVEAALMASDTAPGVAKSGEMLLNYWLGHDESLWQKLVEEAEQREQVGLKHLPNIYGSDISHKSLDVARNSIQAAGYDDVIEIKQMAVEQGRKWGDWSPGLIVCNPPYGERLGEEETVKQIYLKLGEYLKAEFIHWKAAILTCHTELGMFLGIKAKRSHDFFNGAMSCRLFRFEIEEEWFRQPALQPKQDLAEQVLQLQPDLADTDNAKMVSNRIRKNMKGLKSWVKQNDISAYRVYDADIPEYALAIDLYDTLESGLWVVVAEYAPPKTVNPTKAKRRLYEAMSVLPSVFNVSPERIVFKVRSQQKGQDQYERLDEQKAFFTIVENQTRLRVNFTDYLDTGIFLDHRQVRQEVAKLAAGKRLLNLFCYTATATAEAVKAGCKSSLSLDMSKTYLYWAKHNFMCNDINEKQHVLQQENVLEWLETATQNPKDLFDVIFLDPPSFSTSKRMDGTLDIQRDHVDLIQKTLKLLSKDGKLIFSTNLRKFKLDKASFEPDYQIENITQRTMPKDYARNMKIHQAWLFSRQ.

Residues 43 to 154 (VGYRSCLWSR…RNQLTLSLDL (112 aa)) form the THUMP domain.

It belongs to the methyltransferase superfamily. RlmKL family.

The protein localises to the cytoplasm. The enzyme catalyses guanosine(2445) in 23S rRNA + S-adenosyl-L-methionine = N(2)-methylguanosine(2445) in 23S rRNA + S-adenosyl-L-homocysteine + H(+). The catalysed reaction is guanosine(2069) in 23S rRNA + S-adenosyl-L-methionine = N(2)-methylguanosine(2069) in 23S rRNA + S-adenosyl-L-homocysteine + H(+). Specifically methylates the guanine in position 2445 (m2G2445) and the guanine in position 2069 (m7G2069) of 23S rRNA. This chain is Ribosomal RNA large subunit methyltransferase K/L, found in Hydrogenovibrio crunogenus (strain DSM 25203 / XCL-2) (Thiomicrospira crunogena).